The chain runs to 430 residues: Cortical fragment-lytic enzyme (430 aa).

2 consecutive LysM domains span residues 3–47 and 52–96; these read QIVT…ALIV and NNYY…QLYV. The region spanning 104-430 is the GH18 domain; that stretch reads VESIAYLQPS…VENFTITKKG (327 aa). The Proton donor role is filled by glutamate 219.

This sequence belongs to the glycosyl hydrolase 18 family. Chitinase class II subfamily.

It is found in the spore cortex. Inhibited by diethylpyrocarbonate. N-acetylglucosaminidase involved in cortex peptidoglycan degradation during germination. Cleaves only partially degraded spore peptidoglycans. Recognizes muramic acid delta-lactam residues specific to spore peptidoglycans. In Bacillus cereus, this protein is Cortical fragment-lytic enzyme.